Here is a 552-residue protein sequence, read N- to C-terminus: 2,3-bisphosphoglycerate-independent phosphoglycerate mutase (552 aa).

The span at 1-25 shows a compositional bias: polar residues; the sequence is MTNTQQQSESIDDNQAQLSKQQNSD. The disordered stretch occupies residues 1–30; the sequence is MTNTQQQSESIDDNQAQLSKQQNSDNNKKV. Residues Asp-38 and Ser-88 each contribute to the Mn(2+) site. Ser-88 (phosphoserine intermediate) is an active-site residue. Residues His-149, 179-180, Arg-217, Arg-223, 293-296, and Lys-373 each bind substrate; these read RD and RADR. Positions 440, 444, 481, 482, and 500 each coordinate Mn(2+).

This sequence belongs to the BPG-independent phosphoglycerate mutase family. As to quaternary structure, monomer. Mn(2+) is required as a cofactor.

The catalysed reaction is (2R)-2-phosphoglycerate = (2R)-3-phosphoglycerate. The protein operates within carbohydrate degradation; glycolysis; pyruvate from D-glyceraldehyde 3-phosphate: step 3/5. Functionally, catalyzes the interconversion of 2-phosphoglycerate and 3-phosphoglycerate. This is 2,3-bisphosphoglycerate-independent phosphoglycerate mutase from Psychrobacter arcticus (strain DSM 17307 / VKM B-2377 / 273-4).